The following is a 349-amino-acid chain: Probable myosin light chain kinase DDB_G0275057 (349 aa).

Residues 1–33 are disordered; that stretch reads MGCFNSKEAGAGRPKTTTQQQQQATPEPTVTTA. Low complexity predominate over residues 16–33; it reads TTTQQQQQATPEPTVTTA. The 258-residue stretch at 56–313 folds into the Protein kinase domain; the sequence is YVVGKELGRG…AKQCLDDLWL (258 aa). Residues 62–70 and Lys85 contribute to the ATP site; that span reads LGRGAFSVV. The Proton acceptor role is filled by Asp178.

This sequence belongs to the protein kinase superfamily. CAMK Ser/Thr protein kinase family. CaMK subfamily.

The enzyme catalyses L-seryl-[myosin light chain] + ATP = O-phospho-L-seryl-[myosin light chain] + ADP + H(+). It catalyses the reaction L-threonyl-[myosin light chain] + ATP = O-phospho-L-threonyl-[myosin light chain] + ADP + H(+). Does not have a calmodulin-binding domain. Functionally, may phosphorylate a specific serine in the N-terminus of a myosin light chain. This is Probable myosin light chain kinase DDB_G0275057 from Dictyostelium discoideum (Social amoeba).